The sequence spans 451 residues: Ribonuclease J (451 aa).

Residues histidine 84, histidine 86, aspartate 88, histidine 89, histidine 155, and aspartate 177 each contribute to the Zn(2+) site. Residue histidine 384–histidine 388 coordinates substrate. Histidine 410 contributes to the Zn(2+) binding site.

It belongs to the metallo-beta-lactamase superfamily. RNA-metabolizing metallo-beta-lactamase-like family. Archaeal RNase J subfamily. As to quaternary structure, homodimer. Requires Zn(2+) as cofactor.

The protein resides in the cytoplasm. Inhibited by 1,10-phenanthroline. Functionally, a highly processive 5'-3' exoribonuclease; no evidence has been seen for endonuclease activity. Prefers 5'-phosphate or 5'-hydroxyl ends; 5'-triphosphate substrates are very poorly degraded, does not degrade circular RNA. Does not degrade pre-tRNA(Trp) suggesting it is inhibited by strong secondary structures. Also degrades ssNDA but not dsDNA. In Pyrococcus abyssi (strain GE5 / Orsay), this protein is Ribonuclease J.